Consider the following 122-residue polypeptide: Large ribosomal subunit protein uL14c (122 aa).

The protein belongs to the universal ribosomal protein uL14 family. Part of the 50S ribosomal subunit.

The protein localises to the plastid. It localises to the chloroplast. Its function is as follows. Binds to 23S rRNA. The protein is Large ribosomal subunit protein uL14c of Vitis vinifera (Grape).